Reading from the N-terminus, the 321-residue chain is NADPH-dependent codeinone reductase 1-2 (321 aa).

Thr27 and Asp51 together coordinate NADPH. Active-site proton donor residues include Tyr56 and His119. His119 provides a ligand contact to substrate. NADPH contacts are provided by Ser165, Gln187, Ser214, Leu216, Ser264, and Arg269. A disordered region spans residues 299-321 (SADFLLSPTGPFKTEEEFWDEKD).

This sequence belongs to the aldo/keto reductase family. Latex secreting cells (laticifer cells). Expressed constitutively in all organs with highest levels in capsules. Restricted to the parietal region of sieve elements adjacent or proximal to laticifers in roots, stems, leaves and carpels.

It is found in the cytoplasm. The protein localises to the cytosol. The enzyme catalyses codeine + NADP(+) = codeinone + NADPH + H(+). The catalysed reaction is neopine + NADP(+) = neopinone + NADPH + H(+). It carries out the reaction morphine + NADP(+) = morphinone + NADPH + H(+). It catalyses the reaction neomorphine + NADP(+) = neomorphinone + NADPH + H(+). The protein operates within alkaloid biosynthesis; morphine biosynthesis. Its function is as follows. NADPH-dependent codeinone reductase involved in biosynthesis of morphinan-type benzylisoquinoline and opiate alkaloids natural products. Reduces codeinone to codeine in the penultimate step in morphine biosynthesis. Can use morphinone, hydrocodone and hydromorphone as substrate during reductive reaction with NADPH as cofactor, and morphine and dihydrocodeine as substrate during oxidative reaction with NADP as cofactor. Converts morphinone to morphine, and neomorphinone to neomorphine. Reduces irreversibly neopinone, a spontaneous isomer of codeinone, to neopine; in planta, neopine levels are limited to low levels. In Papaver somniferum (Opium poppy), this protein is NADPH-dependent codeinone reductase 1-2.